The following is a 509-amino-acid chain: Lysine--tRNA ligase (509 aa).

Mg(2+)-binding residues include glutamate 418 and glutamate 425.

It belongs to the class-II aminoacyl-tRNA synthetase family. In terms of assembly, homodimer. It depends on Mg(2+) as a cofactor.

Its subcellular location is the cytoplasm. It carries out the reaction tRNA(Lys) + L-lysine + ATP = L-lysyl-tRNA(Lys) + AMP + diphosphate. The protein is Lysine--tRNA ligase of Acinetobacter baumannii (strain ATCC 17978 / DSM 105126 / CIP 53.77 / LMG 1025 / NCDC KC755 / 5377).